A 669-amino-acid chain; its full sequence is Dymeclin (669 aa).

The N-myristoyl glycine moiety is linked to residue Gly2.

It belongs to the dymeclin family. Interacts with GOLM1 and PPIB. Post-translationally, myristoylated in vitro; myristoylation is not essential for protein targeting to Golgi compartment.

It is found in the cytoplasm. Its subcellular location is the golgi apparatus. The protein localises to the membrane. In terms of biological role, necessary for correct organization of Golgi apparatus. Involved in bone development. The polypeptide is Dymeclin (Dym) (Mus musculus (Mouse)).